We begin with the raw amino-acid sequence, 181 residues long: Disulfide bond formation protein B (181 aa).

At 1–13 (MLSVGQWPNKPFA) the chain is on the cytoplasmic side. Residues 14–30 (WLLLFLGCSGLLGAALY) form a helical membrane-spanning segment. The Periplasmic portion of the chain corresponds to 31 to 48 (FQMVLNLEPCVKCVYQRM). A disulfide bridge connects residues cysteine 40 and cysteine 43. The chain crosses the membrane as a helical span at residues 49–64 (AVIGIGLSAIVGLFGS). Over 65 to 71 (GLWLTRW) the chain is Cytoplasmic. A helical membrane pass occupies residues 72–89 (AALIGWLYSSYQGLLIAY). Topologically, residues 90 to 145 (DHWDLQTSKNAFFAVCESAPNFPDWAPMHEWMPGLFAAPGLCGDIDWQWLGLGMPG) are periplasmic. A disulfide bridge links cysteine 105 with cysteine 131. The helical transmembrane segment at 146-164 (WMTVIFAGLLLIGIIVTIC) threads the bilayer. Over 165 to 181 (HIISSFTKKDGLVLYHK) the chain is Cytoplasmic.

The protein belongs to the DsbB family.

Its subcellular location is the cell inner membrane. Required for disulfide bond formation in some periplasmic proteins. Acts by oxidizing the DsbA protein. The protein is Disulfide bond formation protein B of Idiomarina loihiensis (strain ATCC BAA-735 / DSM 15497 / L2-TR).